The chain runs to 95 residues: Aspartyl/glutamyl-tRNA(Asn/Gln) amidotransferase subunit C (95 aa).

The protein belongs to the GatC family. Heterotrimer of A, B and C subunits.

It catalyses the reaction L-glutamyl-tRNA(Gln) + L-glutamine + ATP + H2O = L-glutaminyl-tRNA(Gln) + L-glutamate + ADP + phosphate + H(+). It carries out the reaction L-aspartyl-tRNA(Asn) + L-glutamine + ATP + H2O = L-asparaginyl-tRNA(Asn) + L-glutamate + ADP + phosphate + 2 H(+). Its function is as follows. Allows the formation of correctly charged Asn-tRNA(Asn) or Gln-tRNA(Gln) through the transamidation of misacylated Asp-tRNA(Asn) or Glu-tRNA(Gln) in organisms which lack either or both of asparaginyl-tRNA or glutaminyl-tRNA synthetases. The reaction takes place in the presence of glutamine and ATP through an activated phospho-Asp-tRNA(Asn) or phospho-Glu-tRNA(Gln). The sequence is that of Aspartyl/glutamyl-tRNA(Asn/Gln) amidotransferase subunit C from Gluconobacter oxydans (strain 621H) (Gluconobacter suboxydans).